The primary structure comprises 502 residues: ATP synthase subunit alpha (502 aa).

ATP is bound at residue 169–176 (GDRQTGKT).

Belongs to the ATPase alpha/beta chains family. In terms of assembly, F-type ATPases have 2 components, CF(1) - the catalytic core - and CF(0) - the membrane proton channel. CF(1) has five subunits: alpha(3), beta(3), gamma(1), delta(1), epsilon(1). CF(0) has three main subunits: a(1), b(2) and c(9-12). The alpha and beta chains form an alternating ring which encloses part of the gamma chain. CF(1) is attached to CF(0) by a central stalk formed by the gamma and epsilon chains, while a peripheral stalk is formed by the delta and b chains.

It localises to the cell inner membrane. It catalyses the reaction ATP + H2O + 4 H(+)(in) = ADP + phosphate + 5 H(+)(out). Produces ATP from ADP in the presence of a proton gradient across the membrane. The alpha chain is a regulatory subunit. This chain is ATP synthase subunit alpha, found in Citrifermentans bemidjiense (strain ATCC BAA-1014 / DSM 16622 / JCM 12645 / Bem) (Geobacter bemidjiensis).